Reading from the N-terminus, the 428-residue chain is Trigger factor (428 aa).

In terms of domain architecture, PPIase FKBP-type spans 163–248 (GDTVVIDFEG…VHEVKAKQLP (86 aa)).

Belongs to the FKBP-type PPIase family. Tig subfamily.

The protein localises to the cytoplasm. The enzyme catalyses [protein]-peptidylproline (omega=180) = [protein]-peptidylproline (omega=0). Involved in protein export. Acts as a chaperone by maintaining the newly synthesized protein in an open conformation. Functions as a peptidyl-prolyl cis-trans isomerase. The protein is Trigger factor of Geobacillus kaustophilus (strain HTA426).